Consider the following 146-residue polypeptide: 3-dehydroquinate dehydratase (146 aa).

Tyrosine 23 serves as the catalytic Proton acceptor. Positions 74, 80, and 87 each coordinate substrate. Residue histidine 100 is the Proton donor of the active site. Substrate is bound by residues 101–102 and arginine 111; that span reads IS.

It belongs to the type-II 3-dehydroquinase family. As to quaternary structure, homododecamer.

It catalyses the reaction 3-dehydroquinate = 3-dehydroshikimate + H2O. Its pathway is metabolic intermediate biosynthesis; chorismate biosynthesis; chorismate from D-erythrose 4-phosphate and phosphoenolpyruvate: step 3/7. Catalyzes a trans-dehydration via an enolate intermediate. This Bacillus mycoides (strain KBAB4) (Bacillus weihenstephanensis) protein is 3-dehydroquinate dehydratase.